Consider the following 246-residue polypeptide: Flavin-dependent thymidylate synthase (246 aa).

The ThyX domain maps to 17-241; that stretch reads ITVELVKSAA…PLTHAAFNAN (225 aa). FAD-binding positions include Ser-69, 92-94, and Glu-101; that span reads RHR. DUMP is bound by residues 89–92, 101–105, and Arg-173; these read EFMR and EESGR. Positions 92–103 match the ThyX motif motif; the sequence is RHRVGWSYNEES. FAD is bound by residues 189–191 and His-195; that span reads NAR. Position 200 (Arg-200) interacts with dUMP. Arg-200 functions as the Involved in ionization of N3 of dUMP, leading to its activation in the catalytic mechanism.

Belongs to the thymidylate synthase ThyX family. Homotetramer. Requires FAD as cofactor.

It carries out the reaction dUMP + (6R)-5,10-methylene-5,6,7,8-tetrahydrofolate + NADPH + H(+) = dTMP + (6S)-5,6,7,8-tetrahydrofolate + NADP(+). It functions in the pathway pyrimidine metabolism; dTTP biosynthesis. Its function is as follows. Catalyzes the reductive methylation of 2'-deoxyuridine-5'-monophosphate (dUMP) to 2'-deoxythymidine-5'-monophosphate (dTMP) while utilizing 5,10-methylenetetrahydrofolate (mTHF) as the methyl donor, and NADPH and FADH(2) as the reductant. In Streptomyces coelicolor (strain ATCC BAA-471 / A3(2) / M145), this protein is Flavin-dependent thymidylate synthase.